Reading from the N-terminus, the 95-residue chain is UPF0213 protein YPA_2977 (95 aa).

The GIY-YIG domain maps to 4 to 79 (SLWHLYLLRT…KQLSKQQKEK (76 aa)).

The protein belongs to the UPF0213 family.

This chain is UPF0213 protein YPA_2977, found in Yersinia pestis bv. Antiqua (strain Antiqua).